Consider the following 222-residue polypeptide: Ribosomal RNA small subunit methyltransferase G (222 aa).

Residues G84, F89, 141–142, and R154 each bind S-adenosyl-L-methionine; that span reads VE.

The protein belongs to the methyltransferase superfamily. RNA methyltransferase RsmG family.

It localises to the cytoplasm. The catalysed reaction is guanosine(527) in 16S rRNA + S-adenosyl-L-methionine = N(7)-methylguanosine(527) in 16S rRNA + S-adenosyl-L-homocysteine. Its function is as follows. Specifically methylates the N7 position of guanine in position 527 of 16S rRNA. This Bradyrhizobium sp. (strain BTAi1 / ATCC BAA-1182) protein is Ribosomal RNA small subunit methyltransferase G.